The primary structure comprises 181 residues: Oligoribonuclease (181 aa).

The Exonuclease domain occupies 8–171 (LIWIDLEMTG…DDIRESVAEL (164 aa)). Tyr-129 is an active-site residue.

Belongs to the oligoribonuclease family.

It is found in the cytoplasm. 3'-to-5' exoribonuclease specific for small oligoribonucleotides. The polypeptide is Oligoribonuclease (Klebsiella pneumoniae subsp. pneumoniae (strain ATCC 700721 / MGH 78578)).